A 447-amino-acid polypeptide reads, in one-letter code: Interferon-induced protein 44-like (447 aa).

A TLDc domain is found at 1–159 (MKVTARLTWI…PVECEIFRVD (159 aa)).

It belongs to the IFI44 family. HA-28 antigen forms a complex with Kb MHC in BALB.B donor cells. Interacts with FKBP5; this interaction modulates IKBKB and IKBKE kinase activities. In terms of tissue distribution, expressed on cells of the hematopoietic lineage. Detected in transformed cell lines of the macrophage and B-cell lineage. Expressed in spleen and bone marrow.

It is found in the cytoplasm. Functionally, type I interferon-stimulated gene (ISG) that plays a critical role in antiviral and antibacterial activity. During bacterial infection, promotes macrophage differentiation and facilitates inflammatory cytokine secretion. Plays a role in the control of respiratory syncycial virus/RSV infection, reducing the ability of the virus to replicate. Acts as a feedback regulator of IFN responses by negatively regulating IKBKB kinase activity through interaction with FKBP5. Its function is as follows. Precursor of the histocompatibility antigen HA-28 in BALB.B mice. More generally, minor histocompatibility antigens refer to immunogenic peptide which, when complexed with MHC, can generate an immune response after recognition by specific T-cells. The peptides are derived from polymorphic intracellular proteins, which are cleaved by normal pathways of antigen processing. The binding of these peptides to MHC molecules and its expression on the cell surface can stimulate T-cell responses and thereby trigger graft rejection or graft-versus-host disease (GVHD). More specifically, HA-28 minor antigen is transcribed in the BALB.B donor but not in host C57BL/6 cells. HA-28 is presented to the donor BALB.B cell surface by Kb MHC. This complex HA-28/Kb MHC elicits cytotoxic T-cell response in C57BL/6 mice immunized with BALB.B spleen cells. It induces C57BL/6 mice cells recognition and lysis by CD8 T-cell from BALB.B mice. The protein is Interferon-induced protein 44-like (Ifi44l) of Mus musculus (Mouse).